A 310-amino-acid polypeptide reads, in one-letter code: Junctional adhesion molecule C (310 aa).

The N-terminal stretch at 1 to 29 is a signal peptide; the sequence is MALSRRLRLRLYARLPDFFLLLLFRGCMI. The Extracellular portion of the chain corresponds to 30-241; that stretch reads EAVNLKSSNR…GQDMEVYDLN (212 aa). Residues 35–127 form the Ig-like V-type domain; that stretch reads KSSNRNPVVH…VALNDRKEVD (93 aa). Intrachain disulfides connect cysteine 53–cysteine 115 and cysteine 160–cysteine 219. Residues asparagine 104 and asparagine 192 are each glycosylated (N-linked (GlcNAc...) asparagine). Positions 139–236 constitute an Ig-like C2-type domain; that stretch reads PVTPVCRIPA…AARCEGQDME (98 aa). A helical membrane pass occupies residues 242 to 262; sequence IAGIIGGVLVVLIVLAVITMG. The Cytoplasmic segment spans residues 263-310; the sequence is ICCAYRRGCFISSKQDGESYKSPGKHDGVNYIRTSEEGDFRHKSSFVI. 2 S-palmitoyl cysteine lipidation sites follow: cysteine 264 and cysteine 265.

This sequence belongs to the immunoglobulin superfamily. As to quaternary structure, interacts with ITGAM. Interacts with GORASP2. In terms of processing, proteolytically cleaved from endothelial cells surface into a soluble form by ADAM10 and ADAM17; the release of soluble JAM3 is increased by pro-inflammatory factors. Post-translationally, N-glycosylated. S-palmitoylated by ZDHHC7. S-palmitoylation promotes expression at tight junctions. Colocalizes with Jam2 near the lumen of seminiferous tubulues. Detected at junctional plaques that correspond to cell-cell contacts between spermatids and Sertoli cells. Detected on endothelial cells, in brain vessels and kidney glomeruli (at protein level). Detected in heart, lung, liver, kidney, testis, thymus, lymph node and Peyer patch. Endothelial cells.

It is found in the cell membrane. The protein resides in the cell junction. Its subcellular location is the desmosome. It localises to the tight junction. The protein localises to the secreted. In terms of biological role, junctional adhesion protein that mediates heterotypic cell-cell interactions with its cognate receptor JAM2 to regulate different cellular processes. Plays a role in homing and mobilization of hematopoietic stem and progenitor cells within the bone marrow. At the surface of bone marrow stromal cells, it contributes to the retention of the hematopoietic stem and progenitor cells expressing JAM3. Plays a central role in leukocytes extravasation by facilitating transmigration through the endothelium. Plays a role in spermatogenesis where JAM2 and JAM3, which are respectively expressed by Sertoli and germ cells, mediate an interaction between both cell types and play an essential role in the anchorage of germ cells onto Sertoli cells and the assembly of cell polarity complexes during spermatid differentiation. Also functions as a counter-receptor for ITGAM, mediating leukocyte-platelet interactions and is involved in the regulation of transepithelial migration of polymorphonuclear neutrophils (PMN). Plays a role in angiogenesis. Plays a role in the regulation of cell migration. During myogenesis, it is involved in myocyte fusion. Promotes chemotaxis of vascular endothelial cells and stimulates angiogenesis. This chain is Junctional adhesion molecule C (Jam3), found in Mus musculus (Mouse).